We begin with the raw amino-acid sequence, 502 residues long: ATP synthase subunit alpha (502 aa).

Position 169–176 (169–176) interacts with ATP; that stretch reads GDRQTGKT.

The protein belongs to the ATPase alpha/beta chains family. As to quaternary structure, F-type ATPases have 2 components, CF(1) - the catalytic core - and CF(0) - the membrane proton channel. CF(1) has five subunits: alpha(3), beta(3), gamma(1), delta(1), epsilon(1). CF(0) has three main subunits: a(1), b(2) and c(9-12). The alpha and beta chains form an alternating ring which encloses part of the gamma chain. CF(1) is attached to CF(0) by a central stalk formed by the gamma and epsilon chains, while a peripheral stalk is formed by the delta and b chains.

It is found in the cell inner membrane. It catalyses the reaction ATP + H2O + 4 H(+)(in) = ADP + phosphate + 5 H(+)(out). In terms of biological role, produces ATP from ADP in the presence of a proton gradient across the membrane. The alpha chain is a regulatory subunit. The sequence is that of ATP synthase subunit alpha from Oleidesulfovibrio alaskensis (strain ATCC BAA-1058 / DSM 17464 / G20) (Desulfovibrio alaskensis).